The sequence spans 1700 residues: Rho guanine nucleotide exchange factor 28 (1700 aa).

Residues 288–343 (TEKATMPSGAAETEEEVRNLESGRSPSEEEEDAKSIKSQVDGPSEHEDQDRLPLDR) form a disordered region. A phosphoserine mark is found at Ser-312 and Ser-314. Basic and acidic residues predominate over residues 330–343 (PSEHEDQDRLPLDR). Ser-478 bears the Phosphoserine mark. The interval 483 to 532 (VADSEGEGGSEPPICYAVGSQSSPRTGLPSGDELDSFETNTEPDCNISRT) is disordered. Ser-623 carries the post-translational modification Phosphoserine. A Phorbol-ester/DAG-type zinc finger spans residues 651–698 (RHQFVPGTFSGVLQCSGCDKTLLGKESLQCANCKANTHKGCKDAVPPC). Residues 846–1041 (KRQDVIFELM…KDMIAAVDLK (196 aa)) enclose the DH domain. Residues 1095–1184 (ATGRFKDILA…NWMRRIQQAV (90 aa)) enclose the PH domain. Disordered stretches follow at residues 1184 to 1205 (VESCPEEEGGRTSESDEERRKA) and 1289 to 1328 (KMGDVSQSSEESPGGTVLMDTPSTQDVPASPTASLVTEGT). Residues 1191-1205 (EGGRTSESDEERRKA) show a composition bias toward basic and acidic residues. Residues 1292-1301 (DVSQSSEESP) are interaction with PTK2/FAK1; required for regulation of axonal branching and synapse formation. The span at 1309-1325 (TPSTQDVPASPTASLVT) shows a compositional bias: polar residues. Positions 1369 to 1380 (IIQAIQNLTRLL) are mediates cytoplasmic retention and interaction with YWHAH. Residues 1421 to 1522 (QEKSRYLEKQ…RERQKMRVQQ (102 aa)) adopt a coiled-coil conformation. An interaction with microtubules region spans residues 1421 to 1700 (QEKSRYLEKQ…DGAEENILYL (280 aa)). An RNA-binding region spans residues 1493-1524 (QLQEYQQSLERLREGQRMVERERQKMRVQQGL). At Ser-1535 the chain carries Phosphoserine. The interval 1563-1576 (FINEAFGHMSLNTS) is mediates cytoplasmic retention and interaction with MAPK8IP1. The disordered stretch occupies residues 1602-1700 (SESPTELKID…DGAEENILYL (99 aa)). Residue Ser-1604 is modified to Phosphoserine. Over residues 1647 to 1663 (DLDSFQSESSSPQDSNQ) the composition is skewed to low complexity. Polar residues predominate over residues 1664–1675 (RGPQPQTLTTEA).

As to quaternary structure, homooligomer; forms some cytoplasmic aggregates. Forms a complex with MAPK8 and MAPK8IP1. Interacts with RHOA. Interacts with microtubules. Interacts with YWHAE and YWHAH. Interacts with PTK2/FAK1. Interacts with NEFL. Interacts with CTNND2; prevents interaction with RHOA. In terms of processing, phosphorylated on tyrosine upon stimulation of cells by laminin. In terms of tissue distribution, highly enriched in the brain (at protein level). Also detected in lung and kidney.

Its subcellular location is the cytoplasm. The protein localises to the cell membrane. Functions as a RHOA-specific guanine nucleotide exchange factor regulating signaling pathways downstream of integrins and growth factor receptors. Functions in axonal branching, synapse formation and dendritic morphogenesis. Also functions in focal adhesion formation, cell motility and B-lymphocytes activation. May regulate NEFL expression and aggregation and play a role in apoptosis. The polypeptide is Rho guanine nucleotide exchange factor 28 (Arhgef28) (Mus musculus (Mouse)).